Reading from the N-terminus, the 82-residue chain is Chaperone protein DnaJ 1 (82 aa).

The tract at residues 1–33 (YHLGGPPVTLKLPPGTPAGRTMRARGKGAVRKD) is disordered.

It belongs to the DnaJ family. In terms of assembly, homodimer. Zn(2+) is required as a cofactor.

It is found in the cytoplasm. Functionally, participates actively in the response to hyperosmotic and heat shock by preventing the aggregation of stress-denatured proteins and by disaggregating proteins, also in an autonomous, DnaK-independent fashion. Unfolded proteins bind initially to DnaJ; upon interaction with the DnaJ-bound protein, DnaK hydrolyzes its bound ATP, resulting in the formation of a stable complex. GrpE releases ADP from DnaK; ATP binding to DnaK triggers the release of the substrate protein, thus completing the reaction cycle. Several rounds of ATP-dependent interactions between DnaJ, DnaK and GrpE are required for fully efficient folding. Also involved, together with DnaK and GrpE, in the DNA replication of plasmids through activation of initiation proteins. The protein is Chaperone protein DnaJ 1 (dnaJ1) of Streptomyces albus G.